Reading from the N-terminus, the 689-residue chain is DNA ligase (689 aa).

Residues 40–44, 89–90, and Glu-121 contribute to the NAD(+) site; these read DSEYD and SL. Lys-123 serves as the catalytic N6-AMP-lysine intermediate. NAD(+) is bound by residues Arg-144, Glu-179, Lys-295, and Lys-319. The Zn(2+) site is built by Cys-413, Cys-416, Cys-431, and Cys-437. The region spanning 610 to 689 is the BRCT domain; the sequence is REQSSLTDKI…EEWLTLIKNV (80 aa).

The protein belongs to the NAD-dependent DNA ligase family. LigA subfamily. Requires Mg(2+) as cofactor. The cofactor is Mn(2+).

It catalyses the reaction NAD(+) + (deoxyribonucleotide)n-3'-hydroxyl + 5'-phospho-(deoxyribonucleotide)m = (deoxyribonucleotide)n+m + AMP + beta-nicotinamide D-nucleotide.. DNA ligase that catalyzes the formation of phosphodiester linkages between 5'-phosphoryl and 3'-hydroxyl groups in double-stranded DNA using NAD as a coenzyme and as the energy source for the reaction. It is essential for DNA replication and repair of damaged DNA. In Rickettsia africae (strain ESF-5), this protein is DNA ligase.